The chain runs to 446 residues: MAQVEANNVTVSQGFRMLFSLMTPEESSFATVEEVPKYVNQATPYFIGLILLEIVLGWLKTDGPHIKINDFITSLSAGMMSRLPQLMMRSVELSAYIYIWDNFHFLELPWDSAWTWWLAFLGVDMGYYWFHRFAHELNILWAGHQVHHSSEYYNLSTALRQSVTQQFSSWIFYSPLALLIPPSVFAVHIQFNLLYQFWIHTELVKDLGPLELILNTPSHHRVHHGRNPYCIDKNYAGILIIWDRMFGTFAPESDKVIYGLTHPIGTFEIWSVEFLYYPYLWQRFWEVEGISNKLSVIWKGPGWTPGKPRLGDIADIPQITGEEKPHDPAWSPVMQAYVILQFFLLLDVYNSLLLDQMILSELTVILLTAYVLLSLTSLGFLIDQRSNAAELEMLRCVLIMLLHRFGYIKPLLPALAFPMEAFILISTIYWSLQSVKQRTDKMKKQN.

Transmembrane regions (helical) follow at residues 39-59 and 103-123; these read VNQA…LGWL and FHFL…FLGV. A Fatty acid hydroxylase domain is found at 117–248; that stretch reads WLAFLGVDMG…LIIWDRMFGT (132 aa). The short motif at 131 to 135 is the Histidine box-1 element; it reads HRFAH. A Histidine box-2 motif is present at residues 144–148; sequence HQVHH. The helical transmembrane segment at 167–187 threads the bilayer; that stretch reads FSSWIFYSPLALLIPPSVFAV. A Histidine box-3 motif is present at residues 220–224; that stretch reads HRVHH. The next 3 membrane-spanning stretches (helical) occupy residues 329-349, 362-382, and 410-430; these read AWSP…LDVY, LTVI…GFLI, and PLLP…TIYW.

It belongs to the sterol desaturase family. TMEM195 subfamily. It depends on Fe cation as a cofactor.

It is found in the endoplasmic reticulum membrane. The catalysed reaction is 1-O-(1,2-saturated-alkyl)-sn-glycerol + (6R)-L-erythro-5,6,7,8-tetrahydrobiopterin + O2 = a 1-(1-hydroxyalkyl)-sn-glycerol + (6R)-L-erythro-6,7-dihydrobiopterin + H2O. In terms of biological role, glyceryl-ether monooxygenase that cleaves the O-alkyl bond of ether lipids. Ether lipids are essential components of brain membranes. The polypeptide is Alkylglycerol monooxygenase (agmo) (Danio rerio (Zebrafish)).